We begin with the raw amino-acid sequence, 862 residues long: Rho guanine nucleotide exchange factor 7 (862 aa).

One can recognise a Calponin-homology (CH) domain in the interval 1 to 112 (MNSAEQTVTW…SLVTLNKVTA (112 aa)). Residues Ser132, Ser155, Ser164, Ser228, and Ser236 each carry the phosphoserine modification. Residues 163-222 (NSQLVVRAKFNFQQTNEDELSFSKGDVIHVTRVEEGGWWEGTHNGRTGWFPSNYVREIKP) form the SH3 domain. In terms of domain architecture, DH spans 250 to 430 (YYNVVLQNIL…KNLSAQCQEV (181 aa)). Residues 452 to 557 (DIKTLGSVTY…WVEHLQKQTK (106 aa)) form the PH domain. The residue at position 497 (Ser497) is a Phosphoserine. 3 disordered regions span residues 559–591 (TSVS…ADSK), 657–679 (KTMK…EFAV), and 728–748 (DQSS…EPSD). Over residues 572 to 585 (PSHTLPSHPLTPSS) the composition is skewed to polar residues. Residues 657-669 (KTMKKLLPKRKPE) are compositionally biased toward basic residues. The segment covering 670 to 679 (RKPSDEEFAV) has biased composition (basic and acidic residues). Phosphoserine is present on Ser673. Positions 731–744 (SLDSLGRRSSLSRL) are enriched in low complexity. Phosphoserine is present on Ser776. Positions 804–854 (KSLVDTVYALKDEVQELRQDNKKMKKSLEEEQRARKDLEKLVRKVLKNMND) form a coiled coil.

Interacts with PAK kinases through the SH3 domain. Interacts with unphosphorylated PAK1. Interacts with ITCH. Interacts with SCRIB; interaction is direct and may play a role in regulation of apoptosis. Interacts with GIT1 and TGFB1I1. Interacts with FRMPD4 (via N-terminus). Interacts with CaMK1. Interacts with BIN2. Interacts with PTK2/FAK1 and RAC1. Interacts with PARVB. Interacts with YWHAZ. Interacts (via PH domain) with NOX1 (via FAD-binding FR-type domain). In terms of processing, phosphorylated on Ser-673 by CaMK1; enhancement of GEF activity and downstream activation of RAC1. Phosphorylated by PTK2/FAK1; this promotes interaction with RAC1. Seems to be expressed in the central nervous system. Isoform B, isoform C and isoform E are expressed with highest levels in brain and testis.

The protein resides in the cell junction. It is found in the focal adhesion. The protein localises to the cell projection. It localises to the ruffle. Its subcellular location is the cytoplasm. The protein resides in the cell cortex. It is found in the lamellipodium. In terms of biological role, acts as a RAC1 guanine nucleotide exchange factor (GEF) and can induce membrane ruffling. May function as a positive regulator of apoptosis. Functions in cell migration, attachment and cell spreading. Promotes targeting of RAC1 to focal adhesions. Downstream of NMDA receptors and CaMKK-CaMK1 signaling cascade, promotes the formation of spines and synapses in hippocampal neurons. The polypeptide is Rho guanine nucleotide exchange factor 7 (Arhgef7) (Mus musculus (Mouse)).